The primary structure comprises 424 residues: Serine--tRNA ligase (424 aa).

230 to 232 (TAE) contacts L-serine. Residue 261–263 (RSE) participates in ATP binding. E284 contacts L-serine. 348–351 (EISS) serves as a coordination point for ATP. S384 contacts L-serine.

Belongs to the class-II aminoacyl-tRNA synthetase family. Type-1 seryl-tRNA synthetase subfamily. Homodimer. The tRNA molecule binds across the dimer.

It localises to the cytoplasm. The enzyme catalyses tRNA(Ser) + L-serine + ATP = L-seryl-tRNA(Ser) + AMP + diphosphate + H(+). It carries out the reaction tRNA(Sec) + L-serine + ATP = L-seryl-tRNA(Sec) + AMP + diphosphate + H(+). Its pathway is aminoacyl-tRNA biosynthesis; selenocysteinyl-tRNA(Sec) biosynthesis; L-seryl-tRNA(Sec) from L-serine and tRNA(Sec): step 1/1. Catalyzes the attachment of serine to tRNA(Ser). Is also able to aminoacylate tRNA(Sec) with serine, to form the misacylated tRNA L-seryl-tRNA(Sec), which will be further converted into selenocysteinyl-tRNA(Sec). The polypeptide is Serine--tRNA ligase (Nitratidesulfovibrio vulgaris (strain ATCC 29579 / DSM 644 / CCUG 34227 / NCIMB 8303 / VKM B-1760 / Hildenborough) (Desulfovibrio vulgaris)).